A 190-amino-acid polypeptide reads, in one-letter code: MSRKNKALLEIAKDIGGDEAVEIVKALEKKGEATDEELAEITGIRVNTVRKILYALYDEKLADFKRIKDEETGWYYYYWHLETKRLPEIIRARKLRELERLKKMLQEETSEVYYHCGNPEHPKLTFDEAFEYGFTCPICGEILQEYDNSAVIEELKKRIEELEIELGLRPSPKKEKKKTRAKAKRKTRKK.

The 84-residue stretch at K4–P87 folds into the HTH TFE/IIEalpha-type domain. The disordered stretch occupies residues P170–K190. Over residues K174 to K190 the composition is skewed to basic residues.

It belongs to the TFE family. In terms of assembly, monomer. Interaction with RNA polymerase subunits RpoF and RpoE is necessary for Tfe stimulatory transcription activity. Able to interact with Tbp and RNA polymerase in the absence of DNA promoter. Interacts both with the preinitiation and elongation complexes.

Functionally, transcription factor that plays a role in the activation of archaeal genes transcribed by RNA polymerase. Facilitates transcription initiation by enhancing TATA-box recognition by TATA-box-binding protein (Tbp), and transcription factor B (Tfb) and RNA polymerase recruitment. Not absolutely required for transcription in vitro, but particularly important in cases where Tbp or Tfb function is not optimal. It dynamically alters the nucleic acid-binding properties of RNA polymerases by stabilizing the initiation complex and destabilizing elongation complexes. Seems to translocate with the RNA polymerase following initiation and acts by binding to the non template strand of the transcription bubble in elongation complexes. The chain is Transcription factor E from Pyrococcus abyssi (strain GE5 / Orsay).